The chain runs to 433 residues: Homoserine O-acetyltransferase (433 aa).

The AB hydrolase-1 domain maps to 41–385 (NVVLVCHALT…HGHDAFLVEP (345 aa)). Residues 55–74 (VARSPAPERNEGTRGAGQAG) form a disordered region. The Nucleophile role is filled by serine 166. Residue arginine 237 participates in substrate binding. Catalysis depends on residues aspartate 345 and histidine 378. Aspartate 379 provides a ligand contact to substrate. Residues 403-433 (RAVSDDGGGGGNDSARPERDHAPVHASLFKG) form a disordered region.

Belongs to the AB hydrolase superfamily. MetX family. Homodimer.

It localises to the cytoplasm. It carries out the reaction L-homoserine + acetyl-CoA = O-acetyl-L-homoserine + CoA. It functions in the pathway amino-acid biosynthesis; L-methionine biosynthesis via de novo pathway; O-acetyl-L-homoserine from L-homoserine: step 1/1. Its function is as follows. Transfers an acetyl group from acetyl-CoA to L-homoserine, forming acetyl-L-homoserine. The chain is Homoserine O-acetyltransferase from Halorubrum lacusprofundi (strain ATCC 49239 / DSM 5036 / JCM 8891 / ACAM 34).